Here is a 150-residue protein sequence, read N- to C-terminus: Leukotriene C4 synthase (150 aa).

The Cytoplasmic portion of the chain corresponds to 1-6 (MKEETA). Residues 7-27 (LLATVTLLGVLLQAYFSLQVI) form a helical membrane-spanning segment. Residues 28–48 (SARRTFHVSPPLTSGPPEFER) are Lumenal-facing. Residue Arg-30 coordinates glutathione. Arg-31 acts as the Proton donor in catalysis. Residue Ser-36 is modified to Phosphoserine. The chain crosses the membrane as a helical span at residues 49 to 69 (VFRAQVNCSEYFPLFLATLWV). Glutathione-binding positions include 51–55 (RAQVN) and 58–59 (EY). At 70–73 (AGIF) the chain is on the cytoplasmic side. A helical transmembrane segment spans residues 74–94 (FHEGAAALCGLFYLFARLRYF). Position 93–97 (93–97 (YFQGY)) interacts with glutathione. Residues 95-104 (QGYARSAQHR) are Lumenal-facing. Arg-104 functions as the Proton acceptor in the catalytic mechanism. A helical transmembrane segment spans residues 105 to 124 (LDPLYASARALWLLVAMAAL). Topologically, residues 125–150 (GLLVHFLPGTLRAALFRWLQVLLPMA) are cytoplasmic.

It belongs to the MAPEG family. As to quaternary structure, homotrimer. Interacts with ALOX5AP and ALOX5. Post-translationally, phosphorylation at Ser-36 by RPS6KB1 inhibits the leukotriene-C4 synthase activity.

The protein localises to the nucleus outer membrane. It localises to the endoplasmic reticulum membrane. Its subcellular location is the nucleus membrane. The enzyme catalyses leukotriene C4 = leukotriene A4 + glutathione. It catalyses the reaction (13S,14S)-epoxy-(4Z,7Z,9E,11E,16Z,19Z)-docosahexaenoate + glutathione = (13R)-S-glutathionyl-(14S)-hydroxy-(4Z,7Z,9E,11E,16Z,19Z)-docosahexaenoate. The protein operates within lipid metabolism; leukotriene C4 biosynthesis. With respect to regulation, inhibited by MK886. Its function is as follows. Catalyzes the conjugation of leukotriene A4 with reduced glutathione (GSH) to form leukotriene C4 with high specificity. Can also catalyze the transfer of a glutathionyl group from glutathione (GSH) to 13(S),14(S)-epoxy-docosahexaenoic acid to form maresin conjugate in tissue regeneration 1 (MCTR1), a bioactive lipid mediator that possess potent anti-inflammatory and proresolving actions. The protein is Leukotriene C4 synthase (Ltc4s) of Rattus norvegicus (Rat).